Here is a 164-residue protein sequence, read N- to C-terminus: FMN reductase (NADH) RutF (164 aa).

Belongs to the non-flavoprotein flavin reductase family. RutF subfamily.

It catalyses the reaction FMNH2 + NAD(+) = FMN + NADH + 2 H(+). Its function is as follows. Catalyzes the reduction of FMN to FMNH2 which is used to reduce pyrimidine by RutA via the Rut pathway. The protein is FMN reductase (NADH) RutF of Escherichia coli (strain K12 / MC4100 / BW2952).